Reading from the N-terminus, the 217-residue chain is Somatotropin (217 aa).

A signal peptide spans methionine 1–alanine 26. A Zn(2+)-binding site is contributed by histidine 44. The cysteines at positions 79 and 191 are disulfide-linked. Serine 132 carries the post-translational modification Phosphoserine. Glutamate 200 is a binding site for Zn(2+). Residues cysteine 208 and cysteine 215 are joined by a disulfide bond.

This sequence belongs to the somatotropin/prolactin family.

The protein resides in the secreted. Its function is as follows. Plays an important role in growth control. Its major role in stimulating body growth is to stimulate the liver and other tissues to secrete IGF1. It stimulates both the differentiation and proliferation of myoblasts. It also stimulates amino acid uptake and protein synthesis in muscle and other tissues. This Saimiri boliviensis boliviensis (Bolivian squirrel monkey) protein is Somatotropin (GH1).